The chain runs to 418 residues: DnaJ protein homolog 2 (418 aa).

Positions Asn-11–Glu-76 constitute a J domain. The segment at Gly-135 to Lys-219 adopts a CR-type zinc-finger fold. CXXCXGXG motif repeat units follow at residues Cys-148 to Gly-155, Cys-164 to Gly-171, Cys-191 to Gly-198, and Cys-207 to Lys-214. The disordered stretch occupies residues Val-382–Gln-418. Cys-415 bears the Cysteine methyl ester mark. Cys-415 is lipidated: S-farnesyl cysteine. The propeptide at Ala-416–Gln-418 is removed in mature form.

The protein localises to the membrane. Plays a continuous role in plant development probably in the structural organization of compartments. The chain is DnaJ protein homolog 2 (LDJ2) from Allium porrum (Leek).